We begin with the raw amino-acid sequence, 100 residues long: Aspartyl/glutamyl-tRNA(Asn/Gln) amidotransferase subunit C (100 aa).

This sequence belongs to the GatC family. As to quaternary structure, heterotrimer of A, B and C subunits.

It carries out the reaction L-glutamyl-tRNA(Gln) + L-glutamine + ATP + H2O = L-glutaminyl-tRNA(Gln) + L-glutamate + ADP + phosphate + H(+). It catalyses the reaction L-aspartyl-tRNA(Asn) + L-glutamine + ATP + H2O = L-asparaginyl-tRNA(Asn) + L-glutamate + ADP + phosphate + 2 H(+). Functionally, allows the formation of correctly charged Asn-tRNA(Asn) or Gln-tRNA(Gln) through the transamidation of misacylated Asp-tRNA(Asn) or Glu-tRNA(Gln) in organisms which lack either or both of asparaginyl-tRNA or glutaminyl-tRNA synthetases. The reaction takes place in the presence of glutamine and ATP through an activated phospho-Asp-tRNA(Asn) or phospho-Glu-tRNA(Gln). In Erythrobacter litoralis (strain HTCC2594), this protein is Aspartyl/glutamyl-tRNA(Asn/Gln) amidotransferase subunit C.